The chain runs to 882 residues: Translation initiation factor IF-2 (882 aa).

Positions 28-296 are disordered; it reads GIRKSADDSV…LQQGFQKPAQ (269 aa). Positions 67–81 are enriched in polar residues; it reads STLNIPGTGGKSKSV. Positions 92–209 are enriched in basic and acidic residues; that stretch reads VKRDPQEAER…RMAEENKWTD (118 aa). Residues 244-258 show a composition bias toward basic residues; sequence GRGRNAKAARPKKGN. Basic and acidic residues predominate over residues 259–272; that stretch reads KHAESKADREEARA. The tr-type G domain occupies 381-550; the sequence is PRAPVVTIMG…LLQAEVLELK (170 aa). The interval 390–397 is G1; sequence GHVDHGKT. 390-397 is a binding site for GTP; sequence GHVDHGKT. Residues 415–419 form a G2 region; the sequence is GITQH. Residues 436-439 are G3; it reads DTPG. GTP-binding positions include 436–440 and 490–493; these read DTPGH and NKID. Residues 490-493 form a G4 region; that stretch reads NKID. A G5 region spans residues 526–528; that stretch reads SAK. The residue at position 800 (Lys800) is an N6-acetyllysine.

This sequence belongs to the TRAFAC class translation factor GTPase superfamily. Classic translation factor GTPase family. IF-2 subfamily.

Its subcellular location is the cytoplasm. In terms of biological role, one of the essential components for the initiation of protein synthesis. Protects formylmethionyl-tRNA from spontaneous hydrolysis and promotes its binding to the 30S ribosomal subunits. Also involved in the hydrolysis of GTP during the formation of the 70S ribosomal complex. This chain is Translation initiation factor IF-2, found in Shigella boydii serotype 4 (strain Sb227).